The primary structure comprises 1097 residues: MSSSAIQVAKTATYLPDLVEVQRASFKWFLDLGLIEELESFSPITDYTGKLELHFIGSEYRLKRPRHDVEEAKRRDATFASQMYVTCRLVNKETGEIKEQEVFIGELPLMTERGTFIINGAERVIVNQIVRSPGVYFKDEMDKNGRRTYNASVIPNRGAWLKFETDKNSLLHVRVDKTRKINAHVLMRAMGLSDNDVLDKLRHPEFYKKSIDAANDEGISSEDQALLELYKKLRPGEPPSVSGGQQLLQTRFFDPKRYDLGRVGRYKINKKLRLTIPDTVRTLTHEDVLSTLDYLINLELDVGGASLDDIDHLGNRRVRSVGELLQNQVRVGLNRLERIIKERMTVGETDSLTPAQLVNPKPLVAAIKEFFGSSQLSQFMDQTNPLAELTHKRRISALGPGGLTRERAGFAVRDIHPSHYGRLCPIETPEGPNAGLINSLATHARVNEYGFIETPFWKVENGVVIKDGDPIYLSADREDEVRVAPGDVATESDGRIKADLIPVRYRQDFEKVPPEQVDYVALSPVQVISVAASLIPFLEHDDANRALMGSNMQRQAVPLLRPERALVGTGLETQVARDSGMVPISRVNGTVIFVDATAIVVQDEDGQEHTHYLQKYQRSNQDTCLNHRPIVRCGDQVIVGQVMADGSACEGGEIALGQNVLIAYMPWEGYNFEDALLVSERLVTDDLYTSVHIEKYEIEARQTKLGPEEITREIPNVAEESLGNLDEMGIIRVGAFVESGDILVGKVTPKGESDQPPEEKLLRAIFGEKARDVRDNSLRVPGTERGRVVDVRIYTREQGDELPPGANMVVRVYVAQRRKIQVGDKMAGRHGNKGIISRILPREDMPYLPDGTPVDICLNPLGVPSRMNVGQVFELLMGWAASNLDSRVRIVPFDEMHGAEMSQETCEAFLKEAAKQPGKAWVYNPDDPGKLVLRDGRTGQPFDQPVAVGYSHFLKLVHLVDDKIHARSTGPYSLVTQQPLGGKAQQGGQRLGEMEVWALEAYGAAYTLQELLTVKSDDMQGRNEALNAIVKGKPIPRPGTPESFKVLMRELQSLGLDIAVYTDEGKEVDLMQDVNPRRSTPSRPTYESLGVADYDED.

The tract at residues Q1072–D1097 is disordered.

It belongs to the RNA polymerase beta chain family. In cyanobacteria the RNAP catalytic core is composed of 2 alpha, 1 beta, 1 beta', 1 gamma and 1 omega subunit. When a sigma factor is associated with the core the holoenzyme is formed, which can initiate transcription.

It carries out the reaction RNA(n) + a ribonucleoside 5'-triphosphate = RNA(n+1) + diphosphate. In terms of biological role, DNA-dependent RNA polymerase catalyzes the transcription of DNA into RNA using the four ribonucleoside triphosphates as substrates. This chain is DNA-directed RNA polymerase subunit beta, found in Parasynechococcus marenigrum (strain WH8102).